Reading from the N-terminus, the 193-residue chain is MAASAWLEAGLARVLFYPTLLYTVFRGRVGGPAHRDWYHRIDHTVLLGALPLRSMTRRLVLDENVRGVITMNEEYETRFLCNTSKEWKNVGVEQLRLSTVDMTGVPTLANLHRGVQFALKYQSLGQCVYVHCKAGRSRSATMVAAYLIQVHNWSPEEAIEAIAKIRSHISIRPSQLEILKEFHKEIAARAAKN.

A mitochondrion-targeting transit peptide spans Met-1–Gly-31. The Tyrosine-protein phosphatase domain maps to Trp-37 to Ala-188. N6-succinyllysine is present on Lys-85. The active-site Phosphocysteine intermediate is Cys-132.

This sequence belongs to the protein-tyrosine phosphatase family. Non-receptor class dual specificity subfamily. As to quaternary structure, interacts with STYXL1; the interaction inhibits PTPMT1 catalytic activity. In terms of tissue distribution, expressed in liver and in pancreatic beta cells.

The protein localises to the mitochondrion inner membrane. It carries out the reaction O-phospho-L-tyrosyl-[protein] + H2O = L-tyrosyl-[protein] + phosphate. It catalyses the reaction O-phospho-L-seryl-[protein] + H2O = L-seryl-[protein] + phosphate. The catalysed reaction is O-phospho-L-threonyl-[protein] + H2O = L-threonyl-[protein] + phosphate. The enzyme catalyses a 1,2-diacyl-sn-glycero-3-phospho-(1'-sn-glycero-3'-phosphate) + H2O = a 1,2-diacyl-sn-glycero-3-phospho-(1'-sn-glycerol) + phosphate. It carries out the reaction 1,2-di-(9Z-octadecenoyl)-sn-glycero-3-phospho-(1'-sn-glycerol-3'-phosphate) + H2O = 1,2-di-(9Z-octadecenoyl)-sn-glycero-3-phospho-(1'-sn-glycerol) + phosphate. It catalyses the reaction 1,2-dioctanoyl-sn-glycero-3-phospho-(1D-myo-inositol-5-phosphate) + H2O = 1,2-dioctanoyl-sn-glycero-3-phospho-(1D-myo-inositol) + phosphate. The catalysed reaction is a 1-acyl-2-hexanoyl-sn-glycero-3-phospho-(1D-myo-inositol-5-phosphate) + H2O = a 1-acyl-2-hexanoyl-sn-glycero-3-phospho-(1D-myo-inositol) + phosphate. The enzyme catalyses 1,2-dibutyryl-sn-glycero-3-phospho-(1D-myo-inositol-5-phosphate) + H2O = 1,2-dibutyryl-sn-glycero-3-phospho-(1D-myo-inositol) + phosphate. Its pathway is phospholipid metabolism; phosphatidylglycerol biosynthesis; phosphatidylglycerol from CDP-diacylglycerol: step 2/2. Lipid phosphatase which dephosphorylates phosphatidylglycerophosphate (PGP) to phosphatidylglycerol (PG). PGP is an essential intermediate in the biosynthetic pathway of cardiolipin, a mitochondrial-specific phospholipid regulating the membrane integrity and activities of the organelle. Has also been shown to display phosphatase activity toward phosphoprotein substrates, specifically mediates dephosphorylation of mitochondrial proteins, thereby playing an essential role in ATP production. Has probably a preference for proteins phosphorylated on Ser and/or Thr residues compared to proteins phosphorylated on Tyr residues. Probably involved in regulation of insulin secretion in pancreatic beta cells. May prevent intrinsic apoptosis, probably by regulating mitochondrial membrane integrity. This chain is Phosphatidylglycerophosphatase and protein-tyrosine phosphatase 1, found in Rattus norvegicus (Rat).